Here is a 121-residue protein sequence, read N- to C-terminus: Acidic phospholipase A2 PLA-2 (121 aa).

7 disulfides stabilise this stretch: Cys-26–Cys-115, Cys-28–Cys-44, Cys-43–Cys-95, Cys-49–Cys-121, Cys-50–Cys-88, Cys-57–Cys-81, and Cys-75–Cys-86. Tyr-27, Gly-29, and Gly-31 together coordinate Ca(2+). The active site involves His-47. Asp-48 lines the Ca(2+) pocket. Residue Asp-89 is part of the active site.

This sequence belongs to the phospholipase A2 family. Group II subfamily. D49 sub-subfamily. Ca(2+) serves as cofactor. In terms of tissue distribution, expressed by the venom gland.

It is found in the secreted. It catalyses the reaction a 1,2-diacyl-sn-glycero-3-phosphocholine + H2O = a 1-acyl-sn-glycero-3-phosphocholine + a fatty acid + H(+). PLA2 catalyzes the calcium-dependent hydrolysis of the 2-acyl groups in 3-sn-phosphoglycerides. The protein is Acidic phospholipase A2 PLA-2 of Eristicophis macmahoni (Leaf-nosed viper).